A 564-amino-acid chain; its full sequence is 2-succinyl-5-enolpyruvyl-6-hydroxy-3-cyclohexene-1-carboxylate synthase (564 aa).

It belongs to the TPP enzyme family. MenD subfamily. In terms of assembly, homodimer. Mg(2+) serves as cofactor. Requires Mn(2+) as cofactor. It depends on thiamine diphosphate as a cofactor.

The catalysed reaction is isochorismate + 2-oxoglutarate + H(+) = 5-enolpyruvoyl-6-hydroxy-2-succinyl-cyclohex-3-ene-1-carboxylate + CO2. It participates in quinol/quinone metabolism; 1,4-dihydroxy-2-naphthoate biosynthesis; 1,4-dihydroxy-2-naphthoate from chorismate: step 2/7. The protein operates within quinol/quinone metabolism; menaquinone biosynthesis. Functionally, catalyzes the thiamine diphosphate-dependent decarboxylation of 2-oxoglutarate and the subsequent addition of the resulting succinic semialdehyde-thiamine pyrophosphate anion to isochorismate to yield 2-succinyl-5-enolpyruvyl-6-hydroxy-3-cyclohexene-1-carboxylate (SEPHCHC). This Photorhabdus laumondii subsp. laumondii (strain DSM 15139 / CIP 105565 / TT01) (Photorhabdus luminescens subsp. laumondii) protein is 2-succinyl-5-enolpyruvyl-6-hydroxy-3-cyclohexene-1-carboxylate synthase.